Reading from the N-terminus, the 291-residue chain is Exosome complex component RRP42 (291 aa).

A2 is subject to N-acetylalanine. The residue at position 116 (K116) is an N6-acetyllysine. S177 carries the phosphoserine modification.

Belongs to the RNase PH family. As to quaternary structure, component of the RNA exosome core complex (Exo-9), composed of EXOSC1, EXOSC2, EXOSC3, EXOSC4, EXOSC5, EXOSC6, EXOSC7, EXOSC8 and EXOSC9; within the complex interacts with EXOSC2 and EXOSC4. The catalytically inactive RNA exosome core complex (Exo-9) associates with the catalytic subunit EXOSC10/RRP6. Exo-9 may associate with DIS3 to form the nucleolar exosome complex, or DIS3L to form the cytoplasmic exosome complex. Exo-9 is formed by a hexameric base ring consisting of the heterodimers EXOSC4-EXOSC9, EXOSC5-EXOSC8 and EXOSC6-EXOSC7, and a cap ring consisting of EXOSC1, EXOSC2 and EXOSC3. The RNA exosome complex associates with cofactors C1D/RRP47, MPHOSPH6/MPP6 and MTREX/MTR4. Interacts with ZC3HAV1. Interacts with DIS3; the interaction is direct.

Its subcellular location is the nucleus. The protein resides in the nucleolus. It localises to the cytoplasm. In terms of biological role, non-catalytic component of the RNA exosome complex which has 3'-&gt;5' exoribonuclease activity and participates in a multitude of cellular RNA processing and degradation events. In the nucleus, the RNA exosome complex is involved in proper maturation of stable RNA species such as rRNA, snRNA and snoRNA, in the elimination of RNA processing by-products and non-coding 'pervasive' transcripts, such as antisense RNA species and promoter-upstream transcripts (PROMPTs), and of mRNAs with processing defects, thereby limiting or excluding their export to the cytoplasm. The RNA exosome may be involved in Ig class switch recombination (CSR) and/or Ig variable region somatic hypermutation (SHM) by targeting AICDA deamination activity to transcribed dsDNA substrates. In the cytoplasm, the RNA exosome complex is involved in general mRNA turnover and specifically degrades inherently unstable mRNAs containing AU-rich elements (AREs) within their 3' untranslated regions, and in RNA surveillance pathways, preventing translation of aberrant mRNAs. It seems to be involved in degradation of histone mRNA. The catalytic inactive RNA exosome core complex of 9 subunits (Exo-9) is proposed to play a pivotal role in the binding and presentation of RNA for ribonucleolysis, and to serve as a scaffold for the association with catalytic subunits and accessory proteins or complexes. This chain is Exosome complex component RRP42 (EXOSC7), found in Homo sapiens (Human).